A 70-amino-acid chain; its full sequence is Large ribosomal subunit protein bL31 (70 aa).

K8 carries the N6-acetyllysine modification. Zn(2+) contacts are provided by C16, C18, C37, and C40.

Belongs to the bacterial ribosomal protein bL31 family. Type A subfamily. Part of the 50S ribosomal subunit. Zn(2+) is required as a cofactor.

Binds the 23S rRNA. This chain is Large ribosomal subunit protein bL31, found in Escherichia coli O6:K15:H31 (strain 536 / UPEC).